Consider the following 731-residue polypeptide: E3 ubiquitin-protein ligase SMURF1 (731 aa).

One can recognise a C2 domain in the interval 1-120 (MSNVVTRRGG…TGYQRLDLCK (120 aa)). Residues 210-235 (RVRGPEVREHVQTPQNRSHGFQSQDL) are disordered. A compositionally biased stretch (polar residues) spans 221-234 (QTPQNRSHGFQSQD). WW domains lie at 233-266 (QDLP…DPRI) and 279-312 (GSLP…DPRL). In terms of domain architecture, HECT spans 394–731 (RPKDLKKRLM…VEETSGFAVE (338 aa)). Catalysis depends on cysteine 699, which acts as the Glycyl thioester intermediate.

It is found in the cytoplasm. Its subcellular location is the cell membrane. The catalysed reaction is S-ubiquitinyl-[E2 ubiquitin-conjugating enzyme]-L-cysteine + [acceptor protein]-L-lysine = [E2 ubiquitin-conjugating enzyme]-L-cysteine + N(6)-ubiquitinyl-[acceptor protein]-L-lysine.. Its pathway is protein modification; protein ubiquitination. Its function is as follows. E3 ubiquitin-protein ligase that acts as a negative regulator of BMP signaling pathway. Mediates ubiquitination and degradation of smad1 and smad5, 2 receptor-regulated SMADs specific for the BMP pathway. Promotes ubiquitination and subsequent proteasomal degradation of TRAF family members and rhoa. May play a role in dendrite formation by melanocytes. In Xenopus laevis (African clawed frog), this protein is E3 ubiquitin-protein ligase SMURF1 (smurf1).